The following is a 238-amino-acid chain: Small proline-rich protein 3 (238 aa).

The disordered stretch occupies residues 1–67 (MSSYQQKQPF…CSTKVPEPGN (67 aa)). N-acetylserine is present on Ser-2. Tandem repeats lie at residues 52 to 59 (TKIPEPCS), 60 to 67 (TKVPEPGN), 68 to 75 (TVVLEPDY), 76 to 83 (TTMPGPCS), 84 to 91 (TNITEPDY), 92 to 99 (TTIPGPCS), 100 to 107 (TNITEPDY), 108 to 115 (TTIPGPCS), 116 to 123 (TNIPGPDR), 124 to 131 (TVVPGSCS), 132 to 139 (TNITEPDY), 140 to 147 (TTIPGPSS), 148 to 155 (TKIPDPGC), 156 to 163 (AMVPGPSP), 164 to 175 (SSTSEPSSEPCS), 176 to 183 (INVREPGY), 184 to 191 (MNASEPTH), 192 to 199 (AKVPDQGY), 200 to 207 (TKIPDQGS), 208 to 215 (SKVPEPCQ), and 216 to 223 (SRVPEVCP). Positions 52–223 (TKIPEPCSTK…CQSRVPEVCP (172 aa)) are 21 X 8 AA approximate tandem repeats. A disordered region spans residues 110–238 (IPGPCSTNIP…VSAKQKTKQK (129 aa)). Residues 163-175 (PSSTSEPSSEPCS) are compositionally biased toward low complexity.

Belongs to the cornifin (SPRR) family.

The protein resides in the cytoplasm. Functionally, cross-linked envelope protein of keratinocytes. The sequence is that of Small proline-rich protein 3 (Sprr3) from Mus musculus (Mouse).